The following is a 159-amino-acid chain: ATP synthase subunit b 2 (159 aa).

A helical transmembrane segment spans residues 1 to 21 (MDATFWAFIALVIFVVIVVYM).

The protein belongs to the ATPase B chain family. As to quaternary structure, F-type ATPases have 2 components, F(1) - the catalytic core - and F(0) - the membrane proton channel. F(1) has five subunits: alpha(3), beta(3), gamma(1), delta(1), epsilon(1). F(0) has three main subunits: a(1), b(2) and c(10-14). The alpha and beta chains form an alternating ring which encloses part of the gamma chain. F(1) is attached to F(0) by a central stalk formed by the gamma and epsilon chains, while a peripheral stalk is formed by the delta and b chains.

It is found in the cell inner membrane. F(1)F(0) ATP synthase produces ATP from ADP in the presence of a proton or sodium gradient. F-type ATPases consist of two structural domains, F(1) containing the extramembraneous catalytic core and F(0) containing the membrane proton channel, linked together by a central stalk and a peripheral stalk. During catalysis, ATP synthesis in the catalytic domain of F(1) is coupled via a rotary mechanism of the central stalk subunits to proton translocation. Functionally, component of the F(0) channel, it forms part of the peripheral stalk, linking F(1) to F(0). The protein is ATP synthase subunit b 2 of Brucella canis (strain ATCC 23365 / NCTC 10854 / RM-666).